A 1348-amino-acid polypeptide reads, in one-letter code: ABC multidrug transporter atrD (1348 aa).

Over residues 1 to 10 (MSPLETNPLS) the composition is skewed to polar residues. The tract at residues 1–67 (MSPLETNPLS…HRPKSSSSNN (67 aa)) is disordered. The segment covering 20–31 (ETSTTEEQASTP) has biased composition (low complexity). Residue asparagine 99 is glycosylated (N-linked (GlcNAc...) asparagine). 4 consecutive transmembrane segments (helical) span residues 114-134 (ILIMVISTICAIAAGAALPLF), 168-188 (YFVYLGIGEFVTVYVSTVGFI), 240-260 (KVGLTLTALATFVTAFIIAYV), and 268-288 (ICSSTIVALVLTMGGGSQFII). Positions 118–408 (VISTICAIAA…VSPNAQAFTN (291 aa)) constitute an ABC transmembrane type-1 1 domain. N-linked (GlcNAc...) asparagine glycosylation occurs at asparagine 314. Transmembrane regions (helical) follow at residues 344–364 (IVMGFMIGAMFGLMYSNYGLG) and 371–391 (FLVDGAVDVGDILTVLMAILI). Residues 443–688 (IELRNVKHIY…GGAYRKLVEA (246 aa)) form the ABC transporter 1 domain. ATP is bound at residue 478–485 (GPSGSGKS). Asparagine 550 carries N-linked (GlcNAc...) asparagine glycosylation. 2 helical membrane passes run 778–798 (MLIGLVFSVLAGGGQPTQAVL) and 825–845 (LMFFVVGIIQFITQSTNGAAF). The ABC transmembrane type-1 2 domain maps to 779-1068 (LIGLVFSVLA…VFSFAPDMGK (290 aa)). An N-linked (GlcNAc...) asparagine glycan is attached at asparagine 877. 4 helical membrane-spanning segments follow: residues 892 to 912 (HLSGVSGVTLGTILMTSTTLG), 925 to 947 (LALVCISVVPVLLACGFYRFYML), 1015 to 1035 (ALVFFCVALGFWYGGTLLGHH), and 1042 to 1062 (FFVCFSEILFGAQSAGTVFSF). Asparagine 1088 carries N-linked (GlcNAc...) asparagine glycosylation. One can recognise an ABC transporter 2 domain in the interval 1103–1341 (IEFRNVHFRY…KGRYYELVNL (239 aa)). 1138-1145 (GPSGCGKS) is a binding site for ATP.

Belongs to the ABC transporter superfamily. ABCB family. Multidrug resistance exporter (TC 3.A.1.201) subfamily.

It localises to the cell membrane. Fenamirol efflux transporter activity is inhibited by the cyclosporin derivative PSC 833, nigericin, reserpine and valinomycin. The effect of reserpine is transiant, while that of the cyclosporin derivative PSC 833, nigericin and valinomycin is proportional to the time of exposure. Cyclohexinmide has inhibitory effect only when applied prior to addition of the fungicide. Functionally, pleiotropic ABC efflux transporter involved in the protection of the cells against a wide range of toxic compounds. Confers resistance to the azole fenarimol via efflux transport. May also be involved in the secretion of penicillin. The protein is ABC multidrug transporter atrD of Emericella nidulans (Aspergillus nidulans).